Consider the following 305-residue polypeptide: Tyrosine recombinase XerC (305 aa).

A Core-binding (CB) domain is found at 4–95 (TSIQALINKW…AVKNFYRFLE (92 aa)). The region spanning 116 to 298 (LLPKALSEDD…SIKHLEAVYT (183 aa)) is the Tyr recombinase domain. Active-site residues include Arg159, Lys182, His250, Arg253, and His276. Tyr285 acts as the O-(3'-phospho-DNA)-tyrosine intermediate in catalysis.

This sequence belongs to the 'phage' integrase family. XerC subfamily. Forms a cyclic heterotetrameric complex composed of two molecules of XerC and two molecules of XerD.

The protein resides in the cytoplasm. Site-specific tyrosine recombinase, which acts by catalyzing the cutting and rejoining of the recombining DNA molecules. The XerC-XerD complex is essential to convert dimers of the bacterial chromosome into monomers to permit their segregation at cell division. It also contributes to the segregational stability of plasmids. The sequence is that of Tyrosine recombinase XerC from Rickettsia massiliae (strain Mtu5).